The primary structure comprises 666 residues: Probable potassium transport system protein Kup (666 aa).

A run of 12 helical transmembrane segments spans residues Phe53–Leu73, Val89–Val109, Leu144–Thr164, Pro181–Val201, Ala212–Ile232, Ala247–Leu267, Trp291–Leu311, Leu324–Ala344, Ile381–Phe401, Tyr411–Trp431, Ala441–Leu461, and Leu463–Thr483.

It belongs to the HAK/KUP transporter (TC 2.A.72) family.

The protein localises to the cell inner membrane. It carries out the reaction K(+)(in) + H(+)(in) = K(+)(out) + H(+)(out). Transport of potassium into the cell. Likely operates as a K(+):H(+) symporter. The sequence is that of Probable potassium transport system protein Kup from Nitrobacter hamburgensis (strain DSM 10229 / NCIMB 13809 / X14).